The following is a 429-amino-acid chain: Keratin, type I cytoskeletal 47 kDa (429 aa).

The span at 1–16 (MTSYRSSSASYYSGSS) shows a compositional bias: low complexity. Positions 1 to 20 (MTSYRSSSASYYSGSSSKGG) are disordered. The tract at residues 1–69 (MTSYRSSSAS…EAASSSFGGN (69 aa)) is head. The interval 70–105 (EKHAMQNLNDRLASYLEKVRALEATNSDLEGKIRNW) is coil 1A. One can recognise an IF rod domain in the interval 70 to 385 (EKHAMQNLND…RLLEGELGQV (316 aa)). The segment at 106-127 (YDKQSDAGIGAGSKDYSKYFEI) is linker 1. A coil 1B region spans residues 128–219 (IAELRNKIRA…KNHEEEMSHA (92 aa)). Residues 220–242 (KSQSAGKVSVEMDAALGVDLTSI) form a linker 12 region. The tract at residues 243–381 (LNNMRADYEI…QTYRRLLEGE (139 aa)) is coil 2. The interval 382 to 429 (LGQVTTVANTSSVESKTESSSTSTTRTRMVKTIVEEVVDGKVVSSRVE) is tail. The disordered stretch occupies residues 389–408 (ANTSSVESKTESSSTSTTRT). Low complexity predominate over residues 391–408 (TSSVESKTESSSTSTTRT).

This sequence belongs to the intermediate filament family. Heterotetramer of two type I and two type II keratins.

The polypeptide is Keratin, type I cytoskeletal 47 kDa (xk81a1) (Xenopus laevis (African clawed frog)).